The following is a 409-amino-acid chain: Elongation factor Tu, chloroplastic (409 aa).

The region spanning 10 to 214 (KQHVNIGTIG…NVDTYIPTPV (205 aa)) is the tr-type G domain. The interval 19 to 26 (GHVDHGKT) is G1. 19–26 (GHVDHGKT) lines the GTP pocket. Residue Thr-26 participates in Mg(2+) binding. The segment at 60–64 (GITIN) is G2. The interval 81–84 (DCPG) is G3. GTP-binding positions include 81-85 (DCPGH) and 136-139 (NKED). Positions 136-139 (NKED) are G4. Residues 174–176 (SAL) are G5.

It belongs to the TRAFAC class translation factor GTPase superfamily. Classic translation factor GTPase family. EF-Tu/EF-1A subfamily.

It localises to the plastid. It is found in the chloroplast. It catalyses the reaction GTP + H2O = GDP + phosphate + H(+). GTP hydrolase that promotes the GTP-dependent binding of aminoacyl-tRNA to the A-site of ribosomes during protein biosynthesis. The polypeptide is Elongation factor Tu, chloroplastic (tufA) (Tupiella akineta (Green alga)).